A 208-amino-acid chain; its full sequence is Kinetochore protein Spc25 (208 aa).

The stretch at 31–101 (SKIAAKHQLI…KKQRRDELMG (71 aa)) forms a coiled coil.

Belongs to the SPC25 family. In terms of assembly, component of the Ndc80 complex, which is composed of Ndc80, Nuf2 and Spc25.

The protein resides in the nucleus. It localises to the chromosome. The protein localises to the centromere. It is found in the kinetochore. In terms of biological role, acts as a component of the essential kinetochore-associated Ndc80 complex, which is required for chromosome segregation and spindle checkpoint activity during meiosis and mitosis. Required for kinetochore integrity and the organization of stable microtubule binding sites in the outer plate of the kinetochore. Participates in SAC signaling that responds specifically to disruptions in spindle microtubule dynamics. The NDC80 complex synergistically enhances the affinity of the SKA1 complex for microtubules and may allow the NDC80 complex to track depolymerizing microtubules. The sequence is that of Kinetochore protein Spc25 from Drosophila mojavensis (Fruit fly).